Consider the following 486-residue polypeptide: Retrograde regulation protein 3 (486 aa).

Positions 27–35 (ETLDFSLVT) match the 9aaTAD 1 motif. Polar residues-rich tracts occupy residues 75 to 94 (NNNL…TAST) and 101 to 130 (SQSS…IGQG). The segment at 75–130 (NNNLMGSQARSNSQTPTASTIYEEAESQSSYLDDMFRTSQGGRPVTQNSISSIGQG) is disordered. Phosphoserine is present on residues Ser-81, Ser-123, and Ser-142. The residue at position 150 (Thr-150) is a Phosphothreonine. The 9aaTAD 2 signature appears at 189-197 (SSINSDMMT). Phosphoserine occurs at positions 227, 236, and 241. A disordered region spans residues 243–274 (RHGSINTPRTRHTSISSNMTENIGPGSVPKIL). Over residues 246-263 (SINTPRTRHTSISSNMTE) the composition is skewed to polar residues. Ser-269 bears the Phosphoserine mark. In terms of domain architecture, bHLH spans 285–344 (RKREFHNAVERRRRELIKQKIKELGQLVPPSLLNYDDLGKQIKPNKGIILDRTVEYLQYL). The interval 374–395 (ALSPFTNNHHASSGQNNSENSE) is disordered.

In terms of assembly, binds DNA as a heterodimer with RTG1.

The protein localises to the nucleus. Transcription factor that regulates CIT2 gene expression. Binds to two identical sites oriented as inverted repeats 28 bp apart in a regulatory upstream activation sequence element (UASR) in the CIT2 promoter. The core binding site is 5'-GGTCAC-3'. The sequence is that of Retrograde regulation protein 3 (RTG3) from Saccharomyces cerevisiae (strain ATCC 204508 / S288c) (Baker's yeast).